We begin with the raw amino-acid sequence, 283 residues long: tRNA pseudouridine synthase A (283 aa).

Asp-52 (nucleophile) is an active-site residue. Tyr-148 is a substrate binding site.

The protein belongs to the tRNA pseudouridine synthase TruA family. Homodimer.

It carries out the reaction uridine(38/39/40) in tRNA = pseudouridine(38/39/40) in tRNA. Its function is as follows. Formation of pseudouridine at positions 38, 39 and 40 in the anticodon stem and loop of transfer RNAs. In Orientia tsutsugamushi (strain Ikeda) (Rickettsia tsutsugamushi), this protein is tRNA pseudouridine synthase A.